Here is a 1044-residue protein sequence, read N- to C-terminus: Disease resistance protein PIK6-NP (1044 aa).

A structured coiled coil (CC) domain region spans residues 3–184 (LAVGASEATM…PQIVSIKEPV (182 aa)). One can recognise an NB-ARC domain in the interval 187 to 543 (KTVMENLEKW…IAEGFATEKQ (357 aa)). The disordered stretch occupies residues 258–302 (QVSKQEEAGGSTESSSRDENTREPQGSSSTSSREENTAESGTKRM). LRR repeat units lie at residues 635-657 (LAQV…SFNY), 682-705 (MLVL…IEKL), and 706-728 (EYLE…VGQL). The segment at 737 to 771 (GNKNTRKGLRLPQEKRNKAMKNPSPQGKTKEPAEK) is disordered. LRR repeat units follow at residues 808 to 834 (LTGL…LLSS), 840 to 862 (SCGL…LYNM), 866 to 888 (PRYL…ITSI), 889 to 911 (TTLN…ILRN), 935 to 958 (KGIL…EFKS), and 980 to 1004 (MPAL…ILEN).

Belongs to the disease resistance NB-LRR family.

Probable disease resistance protein. Resistance proteins guard the plant against pathogens that contain an appropriate avirulence protein via an indirect interaction with this avirulence protein. That triggers a defense system including the hypersensitive response, which restricts the pathogen growth. At the opposite of cultivar Kusabue, the cultivar Nipponbare doesn't recognize the effector avirulence protein AVR-Pik from M.oryzae. The protein is Disease resistance protein PIK6-NP of Oryza sativa subsp. japonica (Rice).